A 227-amino-acid polypeptide reads, in one-letter code: Glutathione S-transferase U17 (227 aa).

One can recognise a GST N-terminal domain in the interval 4 to 83 (SDVKLIGAWA…YIDDTWSSSG (80 aa)). Glutathione-binding positions include 14–15 (SP), 40–41 (SK), 54–55 (KI), and 67–68 (ES). Residues 90–222 (DPYDRAMARF…KLAEFAKKIF (133 aa)) enclose the GST C-terminal domain.

The protein belongs to the GST superfamily. Tau family.

It is found in the cytoplasm. The protein resides in the cytosol. It catalyses the reaction RX + glutathione = an S-substituted glutathione + a halide anion + H(+). Involved in light signaling, mainly phyA-mediated photomorphogenesis and in the integration of various phytohormone signals to modulate various aspects of plant development by affecting glutathione pools. In vitro, possesses glutathione S-transferase activity toward 1-chloro-2,4-dinitrobenzene (CDNB) and benzyl isothiocyanate (BITC). In Arabidopsis thaliana (Mouse-ear cress), this protein is Glutathione S-transferase U17 (GSTU17).